We begin with the raw amino-acid sequence, 315 residues long: Probable cell division protein WhiA (315 aa).

The H-T-H motif DNA-binding region spans 277–311 (SLQELGAMMPSGQISKSGVNHRLRKLNQIAEGYQQ).

It belongs to the WhiA family.

Involved in cell division and chromosome segregation. This chain is Probable cell division protein WhiA, found in Lacticaseibacillus casei (strain BL23) (Lactobacillus casei).